An 838-amino-acid chain; its full sequence is Protein P (838 aa).

A terminal protein domain (TP) region spans residues 1–179 (MPLSYQHFRK…FCGSPYSWEQ (179 aa)). The segment at 180–341 (ELQHSQRHGD…YCLSHLVNLL (162 aa)) is spacer. The disordered stretch occupies residues 218 to 242 (LGLQPHQGPLATSQPGRSGSIRPRA). A polymerase/reverse transcriptase domain (RT) region spans residues 342-685 (EDWGPCVEHG…YLNLYPVARQ (344 aa)). The Reverse transcriptase domain occupies 352 to 595 (EHHIRIPRTP…YSLNFMGYVI (244 aa)). Mg(2+) is bound by residues Asp424, Asp546, and Asp547.

Belongs to the hepadnaviridae P protein family.

It catalyses the reaction DNA(n) + a 2'-deoxyribonucleoside 5'-triphosphate = DNA(n+1) + diphosphate. The enzyme catalyses Endonucleolytic cleavage to 5'-phosphomonoester.. With respect to regulation, activated by host HSP70 and HSP40 in vitro to be able to bind the epsilon loop of the pgRNA. Because deletion of the RNase H region renders the protein partly chaperone-independent, the chaperones may be needed indirectly to relieve occlusion of the RNA-binding site by this domain. Inhibited by several reverse-transcriptase inhibitors: Lamivudine, Adefovir and Entecavir. Multifunctional enzyme that converts the viral RNA genome into dsDNA in viral cytoplasmic capsids. This enzyme displays a DNA polymerase activity that can copy either DNA or RNA templates, and a ribonuclease H (RNase H) activity that cleaves the RNA strand of RNA-DNA heteroduplexes in a partially processive 3'- to 5'-endonucleasic mode. Neo-synthesized pregenomic RNA (pgRNA) are encapsidated together with the P protein, and reverse-transcribed inside the nucleocapsid. Initiation of reverse-transcription occurs first by binding the epsilon loop on the pgRNA genome, and is initiated by protein priming, thereby the 5'-end of (-)DNA is covalently linked to P protein. Partial (+)DNA is synthesized from the (-)DNA template and generates the relaxed circular DNA (RC-DNA) genome. After budding and infection, the RC-DNA migrates in the nucleus, and is converted into a plasmid-like covalently closed circular DNA (cccDNA). The activity of P protein does not seem to be necessary for cccDNA generation, and is presumably released from (+)DNA by host nuclear DNA repair machinery. The polypeptide is Protein P (Homo sapiens (Human)).